The sequence spans 748 residues: Cytosolic phospholipase A2 (748 aa).

The tract at residues 1 to 178 (MSFIDPYQHI…MRKLLGPKKS (178 aa)) is phospholipid binding. Serine 2 bears the Phosphoserine mark. The region spanning 6–122 (PYQHIIVEHQ…KVGEKKEVPF (117 aa)) is the C2 domain. Ca(2+) is bound by residues aspartate 40, threonine 41, aspartate 43, asparagine 65, aspartate 93, alanine 94, and asparagine 95. The PLA2c domain maps to 138-739 (VCSSPDLRFS…SNVEARRFFN (602 aa)). Serine 228 (nucleophile) is an active-site residue. Threonine 268 carries the post-translational modification Phosphothreonine. Positions 428-458 (HIVSNDSSDSDDESQEPKGTEGEDAEREYQN) are disordered. Phosphoserine is present on residues serine 434, serine 435, and serine 437. Over residues 442–458 (QEPKGTEGEDAEREYQN) the composition is skewed to basic and acidic residues. At serine 505 the chain carries Phosphoserine; by MAPK. Serine 514 is modified (phosphoserine). Lysine 540 participates in a covalent cross-link: Glycyl lysine isopeptide (Lys-Gly) (interchain with G-Cter in SUMO2). The active-site Proton acceptor is aspartate 548. Lysine 605 is covalently cross-linked (Glycyl lysine isopeptide (Lys-Gly) (interchain with G-Cter in SUMO2)). 2 positions are modified to phosphoserine: serine 726 and serine 728.

As to quaternary structure, interacts with KAT5. In terms of processing, phosphorylated at both Ser-505 and Ser-726 in response to mitogenic stimuli.

It is found in the cytoplasm. The protein resides in the golgi apparatus membrane. Its subcellular location is the nucleus envelope. The enzyme catalyses a 1,2-diacyl-sn-glycero-3-phosphocholine + H2O = a 1-acyl-sn-glycero-3-phosphocholine + a fatty acid + H(+). It carries out the reaction a 1-O-alkyl-2-acyl-sn-glycero-3-phosphocholine + H2O = a 1-O-alkyl-sn-glycero-3-phosphocholine + a fatty acid + H(+). It catalyses the reaction a 1-acyl-sn-glycero-3-phosphocholine + H2O = sn-glycerol 3-phosphocholine + a fatty acid + H(+). The catalysed reaction is 1-hexadecanoyl-2-(5Z,8Z,11Z,14Z-eicosatetraenoyl)-sn-glycero-3-phosphocholine + H2O = 1-hexadecanoyl-sn-glycero-3-phosphocholine + (5Z,8Z,11Z,14Z)-eicosatetraenoate + H(+). The enzyme catalyses 1,2-di-(5Z,8Z,11Z,14Z-eicosatetraenoyl)-sn-glycero-3-phosphocholine + H2O = 1-(5Z,8Z,11Z,14Z-eicosatetraenoyl)-sn-glycero-3-phosphocholine + (5Z,8Z,11Z,14Z)-eicosatetraenoate + H(+). It carries out the reaction 1-octadecanoyl-2-(5Z,8Z,11Z,14Z-eicosatetraenoyl)-sn-glycero-3-phosphocholine + H2O = 1-octadecanoyl-sn-glycero-3-phosphocholine + (5Z,8Z,11Z,14Z)-eicosatetraenoate + H(+). It catalyses the reaction 1-hexadecanoyl-2-(9Z,12Z-octadecadienoyl)-sn-glycero-3-phosphocholine + H2O = (9Z,12Z)-octadecadienoate + 1-hexadecanoyl-sn-glycero-3-phosphocholine + H(+). The catalysed reaction is 1-octadecanoyl-2-(9Z,12Z,15Z-octadecatrienoyl)-sn-glycero-3-phosphocholine + H2O = (9Z,12Z,15Z)-octadecatrienoate + 1-octadecanoyl-sn-glycero-3-phosphocholine + H(+). The enzyme catalyses 1-(5Z,8Z,11Z,14Z-eicosatetraenoyl)-2-hexadecanoyl-sn-glycero-3-phosphocholine + H2O = 1-(5Z,8Z,11Z,14Z-eicosatetraenoyl)-sn-glycero-3-phosphocholine + hexadecanoate + H(+). It carries out the reaction 1-O-hexadecyl-2-(5Z,8Z,11Z,14Z)-eicosatetraenoyl-sn-glycero-3-phosphocholine + H2O = 1-O-hexadecyl-sn-glycero-3-phosphocholine + (5Z,8Z,11Z,14Z)-eicosatetraenoate + H(+). It catalyses the reaction 1,2-di-(9Z-octadecenoyl)-sn-glycero-3-phospho-(1'-sn-glycerol) + H2O = 1-(9Z-octadecenoyl)-sn-glycero-3-phospho-(1'-sn-glycerol) + (9Z)-octadecenoate + H(+). The catalysed reaction is 1-octadecanoyl-2-(5Z,8Z,11Z,14Z-eicosatetraenoyl)-sn-glycero-3-phosphate + H2O = 1-octadecanoyl-sn-glycero-3-phosphate + (5Z,8Z,11Z,14Z)-eicosatetraenoate + H(+). The enzyme catalyses 1-hexadecanoyl-sn-glycero-3-phosphocholine + H2O = sn-glycerol 3-phosphocholine + hexadecanoate + H(+). It carries out the reaction 2-(prostaglandin E2)-sn-glycero-3-phosphoethanolamine + H2O = sn-glycero-3-phosphoethanolamine + prostaglandin E2 + H(+). It catalyses the reaction 2-[(15S)-hydroxy-(5Z,8Z,11Z,13E)-eicosatetraenoyl]-sn-glycero-3-phosphocholine + H2O = (15S)-hydroxy-(5Z,8Z,11Z,13E)-eicosatetraenoate + sn-glycerol 3-phosphocholine + H(+). The catalysed reaction is 2-[(15R)-hydroxy-(5Z,8Z,11Z,13E)-eicosatetraenoyl]-sn-glycero-3-phosphocholine + H2O = (15R)-hydroxy-(5Z,8Z,11Z,13E)-eicosatetraenoate + sn-glycerol 3-phosphocholine + H(+). The enzyme catalyses 2-(prostaglandin E2)-sn-glycero-3-phosphocholine + H2O = prostaglandin E2 + sn-glycerol 3-phosphocholine + H(+). It carries out the reaction 2-[(11R)-hydroxy-(5Z,8Z,12E,14Z)-eicosatetraenoyl]-sn-glycero-3-phosphocholine + H2O = (11R)-hydroxy-(5Z,8Z,12E,14Z)-eicosatetraenoate + sn-glycerol 3-phosphocholine + H(+). It catalyses the reaction 1-(5Z,8Z,11Z,14Z-eicosatetraenoyl)-2-O-hexadecyl-sn-glycero-3-phosphocholine + H2O = 2-O-hexadecyl-sn-glycero-3-phosphocholine + (5Z,8Z,11Z,14Z)-eicosatetraenoate + H(+). The catalysed reaction is 1-octadecanoyl-2-(5Z,8Z,11Z,14Z-eicosatetraenoyl)-sn-glycero-3-phosphocholine + glycerol = 1-(5Z,8Z,11Z,14Z-eicosatetraenoyl)-glycerol + 1-octadecanoyl-sn-glycero-3-phosphocholine. The enzyme catalyses 1-octadecanoyl-2-(9Z,12Z,15Z-octadecatrienoyl)-sn-glycero-3-phosphocholine + glycerol = 1-(9Z,12Z,15Z-octadecatrienoyl)-glycerol + 1-octadecanoyl-sn-glycero-3-phosphocholine. It functions in the pathway membrane lipid metabolism; glycerophospholipid metabolism. Its pathway is lipid metabolism; arachidonate metabolism. The protein operates within lipid metabolism; prostaglandin biosynthesis. It participates in lipid metabolism; leukotriene B4 biosynthesis. Its activity is regulated as follows. Activated by cytosolic calcium, which is necessary for binding to membrane lipids. Activated by phosphorylation in response to mitogenic stimuli. Has primarily calcium-dependent phospholipase and lysophospholipase activities, with a major role in membrane lipid remodeling and biosynthesis of lipid mediators of the inflammatory response. Plays an important role in embryo implantation and parturition through its ability to trigger prostanoid production. Preferentially hydrolyzes the ester bond of the fatty acyl group attached at sn-2 position of phospholipids (phospholipase A2 activity). Selectively hydrolyzes sn-2 arachidonoyl group from membrane phospholipids, providing the precursor for eicosanoid biosynthesis via the cyclooxygenase pathway. In an alternative pathway of eicosanoid biosynthesis, hydrolyzes sn-2 fatty acyl chain of eicosanoid lysophopholipids to release free bioactive eicosanoids. Hydrolyzes the ester bond of the fatty acyl group attached at sn-1 position of phospholipids (phospholipase A1 activity) only if an ether linkage rather than an ester linkage is present at the sn-2 position. This hydrolysis is not stereospecific. Has calcium-independent phospholipase A2 and lysophospholipase activities in the presence of phosphoinositides. Has O-acyltransferase activity. Catalyzes the transfer of fatty acyl chains from phospholipids to a primary hydroxyl group of glycerol (sn-1 or sn-3), potentially contributing to monoacylglycerol synthesis. The polypeptide is Cytosolic phospholipase A2 (PLA2G4A) (Oryctolagus cuniculus (Rabbit)).